Here is a 292-residue protein sequence, read N- to C-terminus: Ribosomal protein L11 methyltransferase (292 aa).

Residues Thr144, Gly165, Asp187, and Asn229 each coordinate S-adenosyl-L-methionine.

Belongs to the methyltransferase superfamily. PrmA family.

The protein localises to the cytoplasm. The catalysed reaction is L-lysyl-[protein] + 3 S-adenosyl-L-methionine = N(6),N(6),N(6)-trimethyl-L-lysyl-[protein] + 3 S-adenosyl-L-homocysteine + 3 H(+). Its function is as follows. Methylates ribosomal protein L11. The polypeptide is Ribosomal protein L11 methyltransferase (Pseudomonas fluorescens (strain Pf0-1)).